The primary structure comprises 122 residues: UPF0102 protein Krad_1407 (122 aa).

The protein belongs to the UPF0102 family.

The chain is UPF0102 protein Krad_1407 from Kineococcus radiotolerans (strain ATCC BAA-149 / DSM 14245 / SRS30216).